A 276-amino-acid chain; its full sequence is NH(3)-dependent NAD(+) synthetase (276 aa).

Position 43–50 (43–50 (GISGGVDS)) interacts with ATP. Asp49 provides a ligand contact to Mg(2+). Position 146 (Arg146) interacts with deamido-NAD(+). Thr166 provides a ligand contact to ATP. Residue Glu171 participates in Mg(2+) binding. Residues Lys179 and Asp186 each coordinate deamido-NAD(+). ATP contacts are provided by Lys195 and Thr217. Residue 266–267 (HK) coordinates deamido-NAD(+).

The protein belongs to the NAD synthetase family. As to quaternary structure, homodimer.

The catalysed reaction is deamido-NAD(+) + NH4(+) + ATP = AMP + diphosphate + NAD(+) + H(+). The protein operates within cofactor biosynthesis; NAD(+) biosynthesis; NAD(+) from deamido-NAD(+) (ammonia route): step 1/1. Its function is as follows. Catalyzes the ATP-dependent amidation of deamido-NAD to form NAD. Uses ammonia as a nitrogen source. The chain is NH(3)-dependent NAD(+) synthetase from Vibrio vulnificus (strain YJ016).